The following is a 129-amino-acid chain: Small ribosomal subunit protein uS11 (129 aa).

This sequence belongs to the universal ribosomal protein uS11 family. In terms of assembly, part of the 30S ribosomal subunit. Interacts with proteins S7 and S18. Binds to IF-3.

In terms of biological role, located on the platform of the 30S subunit, it bridges several disparate RNA helices of the 16S rRNA. Forms part of the Shine-Dalgarno cleft in the 70S ribosome. This chain is Small ribosomal subunit protein uS11, found in Lacticaseibacillus casei (strain BL23) (Lactobacillus casei).